The following is a 413-amino-acid chain: Hemolin (413 aa).

Positions 1-18 are cleaved as a signal peptide; the sequence is MVSKSIVALAACVAMCVA. 4 consecutive Ig-like C2-type domains span residues 25–112, 121–215, 233–322, and 327–411; these read PVLK…HIIS, PTTF…LVGY, PMYV…VKLT, and PRFT…TLVI. 4 cysteine pairs are disulfide-bonded: cysteine 46/cysteine 97, cysteine 141/cysteine 199, cysteine 252/cysteine 305, and cysteine 349/cysteine 395. A glycan (N-linked (GlcNAc...) asparagine) is linked at asparagine 283.

Belongs to the hemolin family. As to expression, hemolymph.

The protein localises to the secreted. Insect-immune protein with antimicrobial activity. Forms a protein complex at the bacterial surface. Can inhibit hemocyte aggregation. The polypeptide is Hemolin (Manduca sexta (Tobacco hawkmoth)).